Reading from the N-terminus, the 352-residue chain is MTFIMTSLQTPAVPEHSLDRDCTTLSRHVLQQLQSFSPEAQDLSAIMNRIALAGKLVARRLSRAGLMADVLGFTGETNVQGESVKKMDVYANDVFISVFKQSGLVCRLASEEMDKPYYIPENCPIGRYTLLYDPIDGSSNVDINLNVGSIFAIRQQKEDDLDGEGNDLLKDGREQIAAGYIVYGPSTMLVYSIGHGVHSFLLDPSLGEFILAQENIQIPDHGPVYSTNEGNFWQWDDAIRDYTRYVHRHEGYTARYSGALVGDIHRILMQGGVFLYPGTVKKPEGKLRLLYESAPLAFLVEQAGGKASNGLKPILDVVPDKLHARSPLVIGSKEDVSLVESFIQDHQHRNHG.

The Mg(2+) site is built by Glu111, Asp133, Ile135, and Asp136. Residues Asp136–Ser139, Asn228, Tyr256, and Lys286 each bind substrate. Glu292 serves as a coordination point for Mg(2+).

The protein belongs to the FBPase class 1 family. In terms of assembly, homotetramer. Mg(2+) is required as a cofactor.

Its subcellular location is the cytoplasm. It carries out the reaction beta-D-fructose 1,6-bisphosphate + H2O = beta-D-fructose 6-phosphate + phosphate. The protein operates within carbohydrate biosynthesis; Calvin cycle. This chain is Fructose-1,6-bisphosphatase class 1, found in Crocosphaera subtropica (strain ATCC 51142 / BH68) (Cyanothece sp. (strain ATCC 51142)).